The sequence spans 873 residues: DNA helicase/primase complex-associated protein (873 aa).

The disordered stretch occupies residues 394–422 (PPLPRDDGDGENNVVEVSSSTGGAHPPSD).

Belongs to the herpesviridae HEPA family. In terms of assembly, associates with the primase and the helicase to form the helicase-primase complex. Interacts with the origin-binding protein. Interacts with the polymerase catalytic subunit.

The protein localises to the host nucleus. Its function is as follows. Component of the helicase/primase complex. Unwinds the DNA at the replication forks and generates single-stranded DNA for both leading and lagging strand synthesis. The primase synthesizes short RNA primers on the lagging strand that the polymerase presumably elongates using dNTPs. The primase-associated factor has no known catalytic activity in the complex and may serve to facilitate the formation of the replisome by directly interacting with the origin-binding protein and the polymerase. This chain is DNA helicase/primase complex-associated protein (UL102), found in Human cytomegalovirus (strain Merlin) (HHV-5).